Here is a 243-residue protein sequence, read N- to C-terminus: 7-cyano-7-deazaguanine synthase (243 aa).

9-19 (FSGGQDSTTCL) is a binding site for ATP. Residues Cys-205, Cys-220, Cys-223, and Cys-226 each coordinate Zn(2+).

This sequence belongs to the QueC family. Requires Zn(2+) as cofactor.

The enzyme catalyses 7-carboxy-7-deazaguanine + NH4(+) + ATP = 7-cyano-7-deazaguanine + ADP + phosphate + H2O + H(+). The protein operates within purine metabolism; 7-cyano-7-deazaguanine biosynthesis. In terms of biological role, catalyzes the ATP-dependent conversion of 7-carboxy-7-deazaguanine (CDG) to 7-cyano-7-deazaguanine (preQ(0)). The protein is 7-cyano-7-deazaguanine synthase of Albidiferax ferrireducens (strain ATCC BAA-621 / DSM 15236 / T118) (Rhodoferax ferrireducens).